A 51-amino-acid polypeptide reads, in one-letter code: Large ribosomal subunit protein eL39 (51 aa).

Residues 32-51 (KGSVKQHPKMRHWRRNTLKK) are disordered. The span at 33–51 (GSVKQHPKMRHWRRNTLKK) shows a compositional bias: basic residues.

Belongs to the eukaryotic ribosomal protein eL39 family.

The protein is Large ribosomal subunit protein eL39 of Methanococcus vannielii (strain ATCC 35089 / DSM 1224 / JCM 13029 / OCM 148 / SB).